The chain runs to 921 residues: Isoleucine--tRNA ligase (921 aa).

The 'HIGH' region signature appears at 57–67 (PYANGNIHVGT). Glu-551 lines the L-isoleucyl-5'-AMP pocket. Residues 592–596 (KMSKS) carry the 'KMSKS' region motif. Lys-595 contributes to the ATP binding site. Zn(2+) is bound by residues Cys-885, Cys-888, Cys-905, and Cys-908.

This sequence belongs to the class-I aminoacyl-tRNA synthetase family. IleS type 1 subfamily. Monomer. Zn(2+) serves as cofactor.

The protein localises to the cytoplasm. It carries out the reaction tRNA(Ile) + L-isoleucine + ATP = L-isoleucyl-tRNA(Ile) + AMP + diphosphate. Catalyzes the attachment of isoleucine to tRNA(Ile). As IleRS can inadvertently accommodate and process structurally similar amino acids such as valine, to avoid such errors it has two additional distinct tRNA(Ile)-dependent editing activities. One activity is designated as 'pretransfer' editing and involves the hydrolysis of activated Val-AMP. The other activity is designated 'posttransfer' editing and involves deacylation of mischarged Val-tRNA(Ile). The chain is Isoleucine--tRNA ligase from Kosmotoga olearia (strain ATCC BAA-1733 / DSM 21960 / TBF 19.5.1).